The chain runs to 381 residues: Glycerate kinase (381 aa).

This sequence belongs to the glycerate kinase type-1 family.

It catalyses the reaction (R)-glycerate + ATP = (2R)-3-phosphoglycerate + ADP + H(+). The protein is Glycerate kinase (glxK) of Bacillus cereus (strain ATCC 10987 / NRS 248).